The sequence spans 21 residues: CLGIGSCNDFAGCGYAVVCFW.

The segment at residues 1–9 (CLGIGSCND) is a cross-link (3-cysteinyl-aspartic acid (Cys-Asp)). 2 disulfides stabilise this stretch: Cys1–Cys13 and Cys7–Cys19.

Active against HIV-1 virus in vitro. The polypeptide is Tricyclic peptide RP 71955 (Streptomyces sp. (strain SP9440)).